Here is a 456-residue protein sequence, read N- to C-terminus: Bifunctional protein GlmU (456 aa).

The segment at 1 to 231 (MERTCLAIIL…EEELTGCNTR (231 aa)) is pyrophosphorylase. UDP-N-acetyl-alpha-D-glucosamine is bound by residues 10–13 (LAAG), K24, Q77, and 82–83 (GT). D107 is a Mg(2+) binding site. Residues G143, E157, N172, and N229 each coordinate UDP-N-acetyl-alpha-D-glucosamine. Residue N229 coordinates Mg(2+). The tract at residues 232–252 (AELAYIERLWQQRRRHELMLA) is linker. The N-acetyltransferase stretch occupies residues 253–456 (GVSMVAPETV…LARKIAKAAE (204 aa)). UDP-N-acetyl-alpha-D-glucosamine contacts are provided by R318 and K336. Residue H348 is the Proton acceptor of the active site. Positions 351 and 362 each coordinate UDP-N-acetyl-alpha-D-glucosamine. Acetyl-CoA is bound by residues A365, 371–372 (NY), S390, S408, and R425.

The protein in the N-terminal section; belongs to the N-acetylglucosamine-1-phosphate uridyltransferase family. In the C-terminal section; belongs to the transferase hexapeptide repeat family. Homotrimer. It depends on Mg(2+) as a cofactor.

The protein resides in the cytoplasm. The enzyme catalyses alpha-D-glucosamine 1-phosphate + acetyl-CoA = N-acetyl-alpha-D-glucosamine 1-phosphate + CoA + H(+). The catalysed reaction is N-acetyl-alpha-D-glucosamine 1-phosphate + UTP + H(+) = UDP-N-acetyl-alpha-D-glucosamine + diphosphate. The protein operates within nucleotide-sugar biosynthesis; UDP-N-acetyl-alpha-D-glucosamine biosynthesis; N-acetyl-alpha-D-glucosamine 1-phosphate from alpha-D-glucosamine 6-phosphate (route II): step 2/2. Its pathway is nucleotide-sugar biosynthesis; UDP-N-acetyl-alpha-D-glucosamine biosynthesis; UDP-N-acetyl-alpha-D-glucosamine from N-acetyl-alpha-D-glucosamine 1-phosphate: step 1/1. It participates in bacterial outer membrane biogenesis; LPS lipid A biosynthesis. Catalyzes the last two sequential reactions in the de novo biosynthetic pathway for UDP-N-acetylglucosamine (UDP-GlcNAc). The C-terminal domain catalyzes the transfer of acetyl group from acetyl coenzyme A to glucosamine-1-phosphate (GlcN-1-P) to produce N-acetylglucosamine-1-phosphate (GlcNAc-1-P), which is converted into UDP-GlcNAc by the transfer of uridine 5-monophosphate (from uridine 5-triphosphate), a reaction catalyzed by the N-terminal domain. In Sinorhizobium medicae (strain WSM419) (Ensifer medicae), this protein is Bifunctional protein GlmU.